A 351-amino-acid polypeptide reads, in one-letter code: Anthranilate phosphoribosyltransferase (351 aa).

Residues Gly-84, 87–88 (GD), 95–98 (NISS), 113–121 (KHGNRGASS), and Ala-125 each bind 5-phospho-alpha-D-ribose 1-diphosphate. Gly-84 contributes to the anthranilate binding site. Mg(2+) is bound at residue Ser-97. Asn-116 is an anthranilate binding site. Arg-171 contributes to the anthranilate binding site. Asp-229 and Lys-230 together coordinate Mg(2+).

This sequence belongs to the anthranilate phosphoribosyltransferase family. In terms of assembly, homodimer. Requires Mg(2+) as cofactor.

It carries out the reaction N-(5-phospho-beta-D-ribosyl)anthranilate + diphosphate = 5-phospho-alpha-D-ribose 1-diphosphate + anthranilate. It participates in amino-acid biosynthesis; L-tryptophan biosynthesis; L-tryptophan from chorismate: step 2/5. Catalyzes the transfer of the phosphoribosyl group of 5-phosphorylribose-1-pyrophosphate (PRPP) to anthranilate to yield N-(5'-phosphoribosyl)-anthranilate (PRA). This chain is Anthranilate phosphoribosyltransferase, found in Clavibacter michiganensis subsp. michiganensis (strain NCPPB 382).